Consider the following 188-residue polypeptide: Probable thiol:disulfide interchange protein DsbE-2 (188 aa).

Topologically, residues 1 to 11 (MSMLHQQKRKN) are cytoplasmic. A helical membrane pass occupies residues 12–32 (HFVFLPLVILLAVCALLFIGL). The Periplasmic portion of the chain corresponds to 33–188 (QQDPQKIASA…KLEAENAKVR (156 aa)). The Thioredoxin domain maps to 42–179 (ALIGKPVPTF…QEMFIPEWQK (138 aa)). A disulfide bond links Cys-82 and Cys-85.

The protein belongs to the thioredoxin family. DsbE subfamily.

It localises to the cell inner membrane. Functionally, could be involved in disulfide bond formation. Could catalyzes a late, reductive step in the assembly of periplasmic NrfA c-type cytochrome, probably the reduction of disulfide bonds of the apocytochrome c to allow covalent linkage with the heme. Possible subunit of a heme lyase. This Pasteurella multocida (strain Pm70) protein is Probable thiol:disulfide interchange protein DsbE-2 (nrfX).